Here is a 179-residue protein sequence, read N- to C-terminus: Hypoxanthine phosphoribosyltransferase (179 aa).

Residues arginine 45 and glycine 46 each coordinate diphosphate. Glutamate 101 contributes to the GMP binding site. Glutamate 101 provides a ligand contact to IMP. Mg(2+) is bound by residues glutamate 101 and aspartate 102. The Proton acceptor role is filled by aspartate 105. Residues 105 to 110 (DTGYTL), lysine 133, and aspartate 161 contribute to the GMP site. IMP is bound by residues 105–110 (DTGYTL) and lysine 133. Arginine 167 contributes to the diphosphate binding site.

It belongs to the purine/pyrimidine phosphoribosyltransferase family. As to quaternary structure, homotetramer. Mg(2+) serves as cofactor.

The protein localises to the cytoplasm. It catalyses the reaction IMP + diphosphate = hypoxanthine + 5-phospho-alpha-D-ribose 1-diphosphate. It carries out the reaction GMP + diphosphate = guanine + 5-phospho-alpha-D-ribose 1-diphosphate. It participates in purine metabolism; IMP biosynthesis via salvage pathway; IMP from hypoxanthine: step 1/1. Functionally, purine salvage pathway enzyme which catalyzes the transfer of the ribosyl-5-phosphate group from 5-phospho-alpha-D-ribose 1-diphosphate (PRPP) to the N9 position of hypoxanthine to yield IMP (inosine 5'-monophosphate). To a lesser extent, can also act on guanine leading to GMP, but shows a highly less efficient activity with xanthine. The sequence is that of Hypoxanthine phosphoribosyltransferase (hpt) from Haemophilus influenzae (strain ATCC 51907 / DSM 11121 / KW20 / Rd).